A 220-amino-acid chain; its full sequence is 7-cyano-7-deazaguanine synthase (220 aa).

Leucine 7–alanine 17 is a binding site for ATP. 4 residues coordinate Zn(2+): cysteine 187, cysteine 195, cysteine 198, and cysteine 201.

It belongs to the QueC family. The cofactor is Zn(2+).

It catalyses the reaction 7-carboxy-7-deazaguanine + NH4(+) + ATP = 7-cyano-7-deazaguanine + ADP + phosphate + H2O + H(+). It participates in purine metabolism; 7-cyano-7-deazaguanine biosynthesis. Catalyzes the ATP-dependent conversion of 7-carboxy-7-deazaguanine (CDG) to 7-cyano-7-deazaguanine (preQ(0)). This Methanospirillum hungatei JF-1 (strain ATCC 27890 / DSM 864 / NBRC 100397 / JF-1) protein is 7-cyano-7-deazaguanine synthase.